Consider the following 777-residue polypeptide: Disintegrin and metalloproteinase domain-containing protein 5 (777 aa).

The first 16 residues, 1–16 (MFLVLVLLTGLGRLYA), serve as a signal peptide directing secretion. A propeptide spanning residues 17-142 (GNNPRKTFVQ…VLSGFTHMIY (126 aa)) is cleaved from the precursor. The Extracellular segment spans residues 17–706 (GNNPRKTFVQ…RGYVVLSTKR (690 aa)). N-linked (GlcNAc...) asparagine glycosylation is found at Asn49 and Asn123. Positions 185–382 (RYIDMYIVVN…YGLTCLRNTS (198 aa)) constitute a Peptidase M12B domain. Cystine bridges form between Cys294-Cys377, Cys336-Cys361, Cys338-Cys343, and Cys456-Cys477. Residues 396–485 (RRICGNSIRE…DCVHDTYAQN (90 aa)) enclose the Disintegrin domain. Residue Asn566 is glycosylated (N-linked (GlcNAc...) asparagine). An EGF-like domain is found at 633–667 (NNGSCNAEIHCQGRGICNNLDNCHCHKGFVPPECA). 3 cysteine pairs are disulfide-bonded: Cys637-Cys649, Cys643-Cys655, and Cys657-Cys666. Residues 707 to 727 (FQLIFYIGIPVIIIVAAILIK) form a helical membrane-spanning segment. Over 728–777 (QNQLGKLFCRGEKEHMSSVSEDGSRSVTLSATESKFPADTEHSNKEEDAQ) the chain is Cytoplasmic. Positions 744–760 (SSVSEDGSRSVTLSATE) are enriched in polar residues. The tract at residues 744–777 (SSVSEDGSRSVTLSATESKFPADTEHSNKEEDAQ) is disordered. A compositionally biased stretch (basic and acidic residues) spans 763–777 (FPADTEHSNKEEDAQ).

In terms of assembly, interacts with TEX101. Post-translationally, subject to proteolytic processing during epididymal transit of spermatozoa. As to expression, detected in testis.

Its subcellular location is the membrane. In terms of biological role, this is a non catalytic metalloprotease-like protein. May play a role in sperm-egg fusion. This is Disintegrin and metalloproteinase domain-containing protein 5 (ADAM5) from Cavia porcellus (Guinea pig).